Here is a 246-residue protein sequence, read N- to C-terminus: Probable transcriptional regulatory protein PM0980 (246 aa).

Belongs to the TACO1 family.

It is found in the cytoplasm. The protein is Probable transcriptional regulatory protein PM0980 of Pasteurella multocida (strain Pm70).